The sequence spans 94 residues: MDLRVIDKSDTELSIEIAGEDHTFMNVIKGALLETEGVTAATYDVNPEQSGGQTDPVLTIKTEEGVDALEALEDGTDAVIEKADNFTDAFEAAA.

The protein belongs to the archaeal Rpo11/eukaryotic RPB11/RPC19 RNA polymerase subunit family. As to quaternary structure, part of the RNA polymerase complex.

Its subcellular location is the cytoplasm. The catalysed reaction is RNA(n) + a ribonucleoside 5'-triphosphate = RNA(n+1) + diphosphate. In terms of biological role, DNA-dependent RNA polymerase (RNAP) catalyzes the transcription of DNA into RNA using the four ribonucleoside triphosphates as substrates. The polypeptide is DNA-directed RNA polymerase subunit Rpo11 (Haloarcula marismortui (strain ATCC 43049 / DSM 3752 / JCM 8966 / VKM B-1809) (Halobacterium marismortui)).